Here is a 278-residue protein sequence, read N- to C-terminus: Adenosylcobinamide-GDP ribazoletransferase (278 aa).

6 helical membrane-spanning segments follow: residues 44-64, 69-89, 121-141, 161-181, 204-224, and 227-247; these read GIGV…QLLL, FTPL…TGGF, AFGA…LALL, VCAA…VMIW, GGLA…SLAL, and INLI…LRFF.

The protein belongs to the CobS family. Mg(2+) is required as a cofactor.

It is found in the cell inner membrane. It catalyses the reaction alpha-ribazole + adenosylcob(III)inamide-GDP = adenosylcob(III)alamin + GMP + H(+). The enzyme catalyses alpha-ribazole 5'-phosphate + adenosylcob(III)inamide-GDP = adenosylcob(III)alamin 5'-phosphate + GMP + H(+). Its pathway is cofactor biosynthesis; adenosylcobalamin biosynthesis; adenosylcobalamin from cob(II)yrinate a,c-diamide: step 7/7. Functionally, joins adenosylcobinamide-GDP and alpha-ribazole to generate adenosylcobalamin (Ado-cobalamin). Also synthesizes adenosylcobalamin 5'-phosphate from adenosylcobinamide-GDP and alpha-ribazole 5'-phosphate. This chain is Adenosylcobinamide-GDP ribazoletransferase, found in Polaromonas naphthalenivorans (strain CJ2).